Here is an 84-residue protein sequence, read N- to C-terminus: Putative defensin-like protein 139 (84 aa).

Positions 1–28 (MEPSNQIFFYLRRSKLLSGLGEIRMAKG) are cleaved as a signal peptide. 4 disulfides stabilise this stretch: Cys37–Cys81, Cys46–Cys65, Cys51–Cys75, and Cys55–Cys77.

It belongs to the DEFL family.

The protein resides in the secreted. This chain is Putative defensin-like protein 139 (LCR7), found in Arabidopsis thaliana (Mouse-ear cress).